The following is a 37-amino-acid chain: Photosystem I reaction center subunit IX (37 aa).

The helical transmembrane segment at 4-24 threads the bilayer; that stretch reads FLTTAPVVAAIWFTLTAGILI.

Belongs to the PsaJ family.

The protein localises to the cellular thylakoid membrane. May help in the organization of the PsaE and PsaF subunits. The chain is Photosystem I reaction center subunit IX from Synechococcus sp. (strain WH7803).